Reading from the N-terminus, the 142-residue chain is Transcription antitermination protein NusB (142 aa).

The protein belongs to the NusB family.

Its function is as follows. Involved in transcription antitermination. Required for transcription of ribosomal RNA (rRNA) genes. Binds specifically to the boxA antiterminator sequence of the ribosomal RNA (rrn) operons. This is Transcription antitermination protein NusB from Streptococcus mutans serotype c (strain ATCC 700610 / UA159).